A 199-amino-acid chain; its full sequence is SCO2-like protein RC0042 (199 aa).

This sequence belongs to the SCO1/2 family.

The sequence is that of SCO2-like protein RC0042 from Rickettsia conorii (strain ATCC VR-613 / Malish 7).